The following is a 248-amino-acid chain: uncharacterized protein (248 aa).

9 to 33 (IITGASSGIGKATALLLAEKGAKLV) provides a ligand contact to NADP(+). Serine 141 provides a ligand contact to substrate. Tyrosine 154 serves as the catalytic Proton acceptor.

The protein belongs to the short-chain dehydrogenases/reductases (SDR) family.

This is an uncharacterized protein from Listeria monocytogenes serovar 1/2a (strain ATCC BAA-679 / EGD-e).